We begin with the raw amino-acid sequence, 440 residues long: Cell division protein FtsA (440 aa).

The interval 396–440 is disordered; sequence VSSSEEQEQHHHQNEVQQRPKGKQKTQAEHNKQSKMKKLLSMFWE.

This sequence belongs to the FtsA/MreB family. In terms of assembly, homodimer. Interacts with FtsZ.

The protein localises to the cell membrane. Cell division protein that is required for the assembly of the Z ring. May serve as a membrane anchor for the Z ring. Binds and hydrolyzes ATP. Also involved in sporulation. In Bacillus subtilis (strain 168), this protein is Cell division protein FtsA.